The following is an 86-amino-acid chain: Small ribosomal subunit protein bS20 (86 aa).

It belongs to the bacterial ribosomal protein bS20 family.

In terms of biological role, binds directly to 16S ribosomal RNA. The chain is Small ribosomal subunit protein bS20 from Kocuria rhizophila (strain ATCC 9341 / DSM 348 / NBRC 103217 / DC2201).